Reading from the N-terminus, the 492-residue chain is 2,3-bisphosphoglycerate-independent phosphoglycerate mutase (492 aa).

Mn(2+)-binding residues include D11 and S61. Residue S61 is the Phosphoserine intermediate of the active site. Substrate is bound by residues H118, 147-148, R177, R183, 248-251, and K321; these read RD and RNDR. D387, H391, D428, H429, and H446 together coordinate Mn(2+).

This sequence belongs to the BPG-independent phosphoglycerate mutase family. Monomer. Requires Mn(2+) as cofactor.

It carries out the reaction (2R)-2-phosphoglycerate = (2R)-3-phosphoglycerate. It functions in the pathway carbohydrate degradation; glycolysis; pyruvate from D-glyceraldehyde 3-phosphate: step 3/5. Its function is as follows. Catalyzes the interconversion of 2-phosphoglycerate and 3-phosphoglycerate. The protein is 2,3-bisphosphoglycerate-independent phosphoglycerate mutase of Helicobacter acinonychis (strain Sheeba).